The chain runs to 196 residues: Imidazoleglycerol-phosphate dehydratase (196 aa).

This sequence belongs to the imidazoleglycerol-phosphate dehydratase family.

Its subcellular location is the cytoplasm. It carries out the reaction D-erythro-1-(imidazol-4-yl)glycerol 3-phosphate = 3-(imidazol-4-yl)-2-oxopropyl phosphate + H2O. It functions in the pathway amino-acid biosynthesis; L-histidine biosynthesis; L-histidine from 5-phospho-alpha-D-ribose 1-diphosphate: step 6/9. The sequence is that of Imidazoleglycerol-phosphate dehydratase from Desulfitobacterium hafniense (strain Y51).